The following is a 383-amino-acid chain: Protein pelota homolog (383 aa).

Belongs to the eukaryotic release factor 1 family. Pelota subfamily. Component of the Pelota-HBS1L complex, also named Dom34-Hbs1 complex, composed of PELO and HBS1L. It depends on a divalent metal cation as a cofactor.

Its subcellular location is the cytoplasm. Its function is as follows. Component of the Pelota-HBS1L complex, a complex that recognizes stalled ribosomes and triggers the No-Go Decay (NGD) pathway. In the Pelota-HBS1L complex, PELO recognizes ribosomes stalled at the 3' end of an mRNA and engages stalled ribosomes by destabilizing mRNA in the mRNA channel. Following mRNA extraction from stalled ribosomes by the SKI complex, the Pelota-HBS1L complex promotes recruitment of ABCE1, which drives the disassembly of stalled ribosomes, followed by degradation of damaged mRNAs as part of the NGD pathway. The polypeptide is Protein pelota homolog (pelo) (Xenopus laevis (African clawed frog)).